Here is a 264-residue protein sequence, read N- to C-terminus: MDNRPIGFLDSGVGGLTVVRELMRQLPHEEIVYIGDSARAPYGPRPAEQIREYTWQLVNFLLTKDVKMIVIACNTATAVVWEEIKAQLDIPVLGVILPGASAAIKSSQGGKIGVIGTPMTVQSDIYRQKIHDLDPDLQVESLACPKFAPLVESGALSTSVTKKVVYETLRPLVGKVDSLILGCTHYPLLRPIIQNVMGPKVQLIDSGAECVRDISVLLNYFEINRGRDAGPLHHRFYTTASSQSFAQIGEEWLEKEIHVEHVEL.

Substrate is bound by residues 10-11 (DS) and 42-43 (YG). The active-site Proton donor/acceptor is the cysteine 73. Substrate is bound at residue 74–75 (NT). The active-site Proton donor/acceptor is the cysteine 183. Residue 184–185 (TH) coordinates substrate.

Belongs to the aspartate/glutamate racemases family.

It carries out the reaction L-glutamate = D-glutamate. The protein operates within cell wall biogenesis; peptidoglycan biosynthesis. Functionally, provides the (R)-glutamate required for cell wall biosynthesis. In Streptococcus pneumoniae (strain ATCC BAA-255 / R6), this protein is Glutamate racemase.